The chain runs to 376 residues: Putative glutamate--cysteine ligase 2-1 (376 aa).

It belongs to the glutamate--cysteine ligase type 2 family. YbdK subfamily.

It carries out the reaction L-cysteine + L-glutamate + ATP = gamma-L-glutamyl-L-cysteine + ADP + phosphate + H(+). Its function is as follows. ATP-dependent carboxylate-amine ligase which exhibits weak glutamate--cysteine ligase activity. This Mycolicibacterium smegmatis (strain ATCC 700084 / mc(2)155) (Mycobacterium smegmatis) protein is Putative glutamate--cysteine ligase 2-1.